Reading from the N-terminus, the 496-residue chain is Probable E3 ubiquitin-protein ligase XBOS32 (496 aa).

5 ANK repeats span residues 50 to 79 (GRNSPLHYAAAQGHHEIVSLLLESGVEINL), 83 to 112 (RGQTALMQACQYGHWEVVQTLMLFNANVHR), 117 to 147 (NGGSALHFAALHGHARCLRLVLADYVPSMPN), 180 to 209 (GGLTPLHMAALNGHVECVQLLLDLGASVIE), and 223 to 252 (AGSTPLHYAACGGNAVCCQLLIARGASLSA). The RING-type zinc-finger motif lies at 321–368 (CAVCLEGSCSVAAEGCKHEFCTRCALYLCSTSYTSVSPAGAIPCPLCR).

The catalysed reaction is S-ubiquitinyl-[E2 ubiquitin-conjugating enzyme]-L-cysteine + [acceptor protein]-L-lysine = [E2 ubiquitin-conjugating enzyme]-L-cysteine + N(6)-ubiquitinyl-[acceptor protein]-L-lysine.. It participates in protein modification; protein ubiquitination. This chain is Probable E3 ubiquitin-protein ligase XBOS32 (XBOS32), found in Oryza sativa subsp. japonica (Rice).